A 1331-amino-acid polypeptide reads, in one-letter code: X-linked retinitis pigmentosa GTPase regulator-interacting protein 1 (1331 aa).

3 disordered regions span residues M1–F165, S183–C220, and H351–Q374. Residues N41–R67 show a composition bias toward basic and acidic residues. Polar residues-rich tracts occupy residues V77 to D86 and S183 to S193. Over residues T194–C220 the composition is skewed to basic and acidic residues. 2 coiled-coil regions span residues E236 to Q352 and M498 to H546. Polar residues predominate over residues H351–T367. In terms of domain architecture, C2 spans G745–F870. Disordered regions lie at residues F899–K1057 and A1088–I1146. Residues E908 to E999 adopt a coiled-coil conformation. Acidic residues predominate over residues E910–N988. Composition is skewed to basic and acidic residues over residues P1022–Q1039 and A1088–S1115. Polar residues predominate over residues C1129–T1141. The tract at residues S1136–T1326 is interaction with RPGR.

The protein belongs to the RPGRIP1 family. Interacts with NPHP4. Interacts with NEK4. Forms homodimers and elongated homopolymers. Interacts with RPGR. Interacts with SPATA7. Interacts with CEP290/NPHP6; mediating the association between RPGR and CEP290/NPHP6. Expressed in the retina (at protein level).

Its subcellular location is the cell projection. The protein resides in the cilium. Functionally, may function as scaffolding protein. Required for normal location of RPGR at the connecting cilium of photoreceptor cells. Required for normal disk morphogenesis and disk organization in the outer segment of photoreceptor cells and for survival of photoreceptor cells. The protein is X-linked retinitis pigmentosa GTPase regulator-interacting protein 1 (Rpgrip1) of Mus musculus (Mouse).